The primary structure comprises 334 residues: Tryptophan--tRNA ligase (334 aa).

ATP is bound by residues 11–13 and 19–20; these read QPS and GN. The 'HIGH' region motif lies at 12–20; the sequence is PSGELTIGN. Residue Asp-135 participates in L-tryptophan binding. Residues 147-149, Ile-186, and 195-199 each bind ATP; these read GDD and KMSKS. Positions 195–199 match the 'KMSKS' region motif; sequence KMSKS.

Belongs to the class-I aminoacyl-tRNA synthetase family. In terms of assembly, homodimer.

Its subcellular location is the cytoplasm. The enzyme catalyses tRNA(Trp) + L-tryptophan + ATP = L-tryptophyl-tRNA(Trp) + AMP + diphosphate + H(+). Functionally, catalyzes the attachment of tryptophan to tRNA(Trp). This Haemophilus influenzae (strain ATCC 51907 / DSM 11121 / KW20 / Rd) protein is Tryptophan--tRNA ligase.